A 62-amino-acid chain; its full sequence is Photosystem II reaction center protein Z (62 aa).

A run of 2 helical transmembrane segments spans residues 8-28 (AVFA…VVFA) and 41-61 (FSGT…NSLI).

The protein belongs to the PsbZ family. In terms of assembly, PSII is composed of 1 copy each of membrane proteins PsbA, PsbB, PsbC, PsbD, PsbE, PsbF, PsbH, PsbI, PsbJ, PsbK, PsbL, PsbM, PsbT, PsbY, PsbZ, Psb30/Ycf12, at least 3 peripheral proteins of the oxygen-evolving complex and a large number of cofactors. It forms dimeric complexes.

It localises to the plastid. Its subcellular location is the chloroplast thylakoid membrane. Its function is as follows. May control the interaction of photosystem II (PSII) cores with the light-harvesting antenna, regulates electron flow through the 2 photosystem reaction centers. PSII is a light-driven water plastoquinone oxidoreductase, using light energy to abstract electrons from H(2)O, generating a proton gradient subsequently used for ATP formation. This Pelargonium hortorum (Common geranium) protein is Photosystem II reaction center protein Z.